Reading from the N-terminus, the 387-residue chain is Patatin-11 (387 aa).

The N-terminal stretch at 1 to 23 is a signal peptide; sequence MATTKSVLVLIFMILATTSSTFA. One can recognise a PNPLA domain in the interval 32–230; sequence LSTDGGGIKG…TVGDPALLSL (199 aa). Positions 36–41 match the GXGXXG motif; sequence GGGIKG. A GXSXG motif is present at residues 75–79; the sequence is GTSTG. The active-site Nucleophile is the Ser-77. N-linked (GlcNAc...) asparagine glycosylation is present at Asn-115. The active-site Proton acceptor is the Asp-216. The DGA/G motif lies at 216-218; that stretch reads DGG. Residues 322–385 adopt a coiled-coil conformation; the sequence is ENALNGTTTE…DRKKLRANKA (64 aa). Asn-326 carries N-linked (GlcNAc...) asparagine glycosylation.

Belongs to the patatin family. Tuber.

It localises to the vacuole. Probable lipolytic acyl hydrolase (LAH), an activity which is thought to be involved in the response of tubers to pathogens. The polypeptide is Patatin-11 (Solanum tuberosum (Potato)).